A 366-amino-acid polypeptide reads, in one-letter code: Putative zinc metalloprotease slr1821 (366 aa).

Position 20 (His20) interacts with Zn(2+). The active site involves Glu21. Residue His24 coordinates Zn(2+). The next 3 membrane-spanning stretches (helical) occupy residues 95–115 (AIVISAGVIANLVFAYFLLIG), 293–313 (AVINILPLPALDGGQLVFLLI), and 325–345 (FQMGVMQTGLVLLLSLGVFLI). The 83-residue stretch at 106–188 (LVFAYFLLIG…VPITVEVQRG (83 aa)) folds into the PDZ domain.

It belongs to the peptidase M50B family. Zn(2+) serves as cofactor.

The protein resides in the cell inner membrane. The polypeptide is Putative zinc metalloprotease slr1821 (Synechocystis sp. (strain ATCC 27184 / PCC 6803 / Kazusa)).